A 271-amino-acid chain; its full sequence is Formamidopyrimidine-DNA glycosylase (271 aa).

Pro2 acts as the Schiff-base intermediate with DNA in catalysis. The Proton donor role is filled by Glu3. The active-site Proton donor; for beta-elimination activity is the Lys58. DNA is bound by residues His91, Arg110, and Arg152. The FPG-type zinc-finger motif lies at 237-271; that stretch reads RVYGRTGLACMACETPVKQIVQGNRSTYYCPACQR. Arg261 (proton donor; for delta-elimination activity) is an active-site residue.

This sequence belongs to the FPG family. In terms of assembly, monomer. The cofactor is Zn(2+).

The enzyme catalyses Hydrolysis of DNA containing ring-opened 7-methylguanine residues, releasing 2,6-diamino-4-hydroxy-5-(N-methyl)formamidopyrimidine.. It catalyses the reaction 2'-deoxyribonucleotide-(2'-deoxyribose 5'-phosphate)-2'-deoxyribonucleotide-DNA = a 3'-end 2'-deoxyribonucleotide-(2,3-dehydro-2,3-deoxyribose 5'-phosphate)-DNA + a 5'-end 5'-phospho-2'-deoxyribonucleoside-DNA + H(+). In terms of biological role, involved in base excision repair of DNA damaged by oxidation or by mutagenic agents. Acts as a DNA glycosylase that recognizes and removes damaged bases. Has a preference for oxidized purines, such as 7,8-dihydro-8-oxoguanine (8-oxoG). Has AP (apurinic/apyrimidinic) lyase activity and introduces nicks in the DNA strand. Cleaves the DNA backbone by beta-delta elimination to generate a single-strand break at the site of the removed base with both 3'- and 5'-phosphates. The protein is Formamidopyrimidine-DNA glycosylase of Thioalkalivibrio sulfidiphilus (strain HL-EbGR7).